Consider the following 448-residue polypeptide: MSEKTKEKVSLVSLGCPKNLVDAEVMLGYLSQDEYEVTTDETQADIIVVNTCSFIKEAKQESIDTILDLADRKHDARCKLLIVTGCLPQRYQQELAKELPEVDIFIGTGDYPRIAEIIAEKKQTEEQLCYTGDPNFVYNDEVPRLQSSPHYTAYLKIAEGCSNNCSYCVIPSLRGGHRSRPLATLLAEAKALVEGGVKELNLIAQDITAYGRDLEGKPSLELLIKELVKMEKLKWIRLLYAYPDGVTDSLIQLIKEEPKVCKYLDLPIQHISDPVLSNMKRRSGEAEIRTLISKLRREIPDIAIRTSLIVGFPGETTDDFKKLLQFVEQTRFDRLGVFCYSREDGTPAAEMPDQVSERIKRERHKKLMRTQARVSFKHNRTLVDSEEDVLVEGYSEETELLLKGRSSRQAPDVDGLVYITAGNANVGDIVRLKITDSSDYDLIGEIVD.

The region spanning 7–123 (EKVSLVSLGC…IAEIIAEKKQ (117 aa)) is the MTTase N-terminal domain. Residues Cys-16, Cys-52, Cys-86, Cys-161, Cys-165, and Cys-168 each coordinate [4Fe-4S] cluster. The region spanning 147–377 (SSPHYTAYLK…MRTQARVSFK (231 aa)) is the Radical SAM core domain. A TRAM domain is found at 380–448 (RTLVDSEEDV…DYDLIGEIVD (69 aa)).

The protein belongs to the methylthiotransferase family. RimO subfamily. It depends on [4Fe-4S] cluster as a cofactor.

It localises to the cytoplasm. The enzyme catalyses L-aspartate(89)-[ribosomal protein uS12]-hydrogen + (sulfur carrier)-SH + AH2 + 2 S-adenosyl-L-methionine = 3-methylsulfanyl-L-aspartate(89)-[ribosomal protein uS12]-hydrogen + (sulfur carrier)-H + 5'-deoxyadenosine + L-methionine + A + S-adenosyl-L-homocysteine + 2 H(+). Catalyzes the methylthiolation of an aspartic acid residue of ribosomal protein uS12. The protein is Ribosomal protein uS12 methylthiotransferase RimO of Citrifermentans bemidjiense (strain ATCC BAA-1014 / DSM 16622 / JCM 12645 / Bem) (Geobacter bemidjiensis).